We begin with the raw amino-acid sequence, 453 residues long: Bifunctional protein GlmU (453 aa).

The segment at 1-226 is pyrophosphorylase; it reads MKFSTVILAA…SIEVEGVNDR (226 aa). UDP-N-acetyl-alpha-D-glucosamine contacts are provided by residues 8–11, K22, Q73, 78–79, 100–102, G137, E151, N166, and N224; these read LAAG, GT, and YGD. D102 contributes to the Mg(2+) binding site. N224 contributes to the Mg(2+) binding site. Residues 227 to 247 are linker; the sequence is IQLARLERAFQARQAKKLLEQ. Residues 248-453 form an N-acetyltransferase region; it reads GVMLRDPARF…AGWQRPAKKK (206 aa). R330 and K348 together coordinate UDP-N-acetyl-alpha-D-glucosamine. Catalysis depends on H360, which acts as the Proton acceptor. Positions 363 and 374 each coordinate UDP-N-acetyl-alpha-D-glucosamine. Residues A377, 383-384, S402, A420, and R437 each bind acetyl-CoA; that span reads NY.

It in the N-terminal section; belongs to the N-acetylglucosamine-1-phosphate uridyltransferase family. The protein in the C-terminal section; belongs to the transferase hexapeptide repeat family. As to quaternary structure, homotrimer. Mg(2+) serves as cofactor.

Its subcellular location is the cytoplasm. The enzyme catalyses alpha-D-glucosamine 1-phosphate + acetyl-CoA = N-acetyl-alpha-D-glucosamine 1-phosphate + CoA + H(+). The catalysed reaction is N-acetyl-alpha-D-glucosamine 1-phosphate + UTP + H(+) = UDP-N-acetyl-alpha-D-glucosamine + diphosphate. It participates in nucleotide-sugar biosynthesis; UDP-N-acetyl-alpha-D-glucosamine biosynthesis; N-acetyl-alpha-D-glucosamine 1-phosphate from alpha-D-glucosamine 6-phosphate (route II): step 2/2. Its pathway is nucleotide-sugar biosynthesis; UDP-N-acetyl-alpha-D-glucosamine biosynthesis; UDP-N-acetyl-alpha-D-glucosamine from N-acetyl-alpha-D-glucosamine 1-phosphate: step 1/1. The protein operates within bacterial outer membrane biogenesis; LPS lipid A biosynthesis. Its function is as follows. Catalyzes the last two sequential reactions in the de novo biosynthetic pathway for UDP-N-acetylglucosamine (UDP-GlcNAc). The C-terminal domain catalyzes the transfer of acetyl group from acetyl coenzyme A to glucosamine-1-phosphate (GlcN-1-P) to produce N-acetylglucosamine-1-phosphate (GlcNAc-1-P), which is converted into UDP-GlcNAc by the transfer of uridine 5-monophosphate (from uridine 5-triphosphate), a reaction catalyzed by the N-terminal domain. The polypeptide is Bifunctional protein GlmU (Vibrio cholerae serotype O1 (strain ATCC 39541 / Classical Ogawa 395 / O395)).